A 685-amino-acid polypeptide reads, in one-letter code: Sulfite reductase [ferredoxin], chloroplastic (685 aa).

A chloroplast-targeting transit peptide spans 1–51; the sequence is MTTSFAAAALRDPKLQIPNYHGLRSSSAASSLSRNALSVPSSTRSSSLIRA. 4 residues coordinate [4Fe-4S] cluster: cysteine 495, cysteine 501, cysteine 541, and cysteine 545. Cysteine 545 contributes to the siroheme binding site.

This sequence belongs to the nitrite and sulfite reductase 4Fe-4S domain family. Monomer. Interacts with ferredoxin. Siroheme is required as a cofactor. The cofactor is [4Fe-4S] cluster. Phosphorylated; this phosphorylation reduces DNA-binding. As to expression, expressed in leaves, stems, and roots.

Its subcellular location is the plastid. It is found in the chloroplast stroma. It localises to the chloroplast nucleoid. The protein resides in the plastid stroma. It carries out the reaction hydrogen sulfide + 6 oxidized [2Fe-2S]-[ferredoxin] + 3 H2O = sulfite + 6 reduced [2Fe-2S]-[ferredoxin] + 7 H(+). In terms of biological role, essential protein with sulfite reductase activity required in assimilatory sulfate reduction pathway during both primary and secondary metabolism and thus involved in development and growth. Its function is as follows. DNA-binding protein that binds to both double-stranded and single-stranded DNA without significant sequence specificity to reversibly repress the transcriptional activity of chloroplast nucleoids by promoting DNA compaction and possibly regulate DNA replication. This is Sulfite reductase [ferredoxin], chloroplastic (SIR) from Pisum sativum (Garden pea).